A 351-amino-acid chain; its full sequence is Dysbindin (351 aa).

A Phosphoserine modification is found at Ser-11. Residues Glu-88–Val-181 adopt a coiled-coil conformation. Positions Leu-173–Ala-331 are dysbindin. The Nuclear export signal signature appears at Leu-243–Leu-256. Residues Pro-286 to Ser-351 are disordered. The span at Pro-296–Ser-305 shows a compositional bias: polar residues. Ser-316, Ser-321, and Ser-349 each carry phosphoserine.

It belongs to the dysbindin family. As to quaternary structure, interacts (via its coiled coil domain) with KXD1. Interacts with CMYA5, PI4K2 and RNF151. Component of the biogenesis of lysosome-related organelles complex 1 (BLOC-1) composed of at least BLOC1S1, BLOC1S2, BLOC1S3, BLOC1S4, BLOC1S5, BLOC1S6, DTNBP1/BLOC1S7 and SNAPIN/BLOC1S8. Interacts directly in the complex with BLOC1S5, BLOC1S6 and SNAPIN/BLOC1S8. The BLOC-1 complex associates with the AP-3 protein complex and membrane protein cargos. This BLOC-1 complex also associates with the BLOC-2 complex in endosomes. Binds to DTNA and DTNB but may not be a physiological binding partner. Interacts (isoform 1 and isoform 2 only) with the DNA-dependent protein kinase complex DNA-PK; the interaction phosphorylates DTNBP1 in vitro. Interacts directly in this complex with XRCC5 and XRCC6. Interacts with AP3M1, AP3B2 and TRIM32. Interacts with XPO1; the interaction exports DTNBP1 out of the nucleus. Post-translationally, ubiquitinated by TRIM32. Ubiquitination leads to DTNBP1 degradation. In terms of processing, isoforms 1 and 2 highly phosphorylated by PRKDC in vitro. Isoform 3 only weakly phosphorylated by PRKDC in vitro. As to expression, detected in brain, in neurons and in neuropil. Isoform 1 is expressed in the cerebral cortex, and hippocampal frontal (HF). Specific expression in the posterior half of the superior temporal gyrus (pSTG). Higher expression of isoform 2 and 3 in the HF than in the pSTG while isoform 1 shows no difference in expression in these areas. In the HF, detected in dentate gyrus (DG) and in pyramidal cells of hippocampus CA2 and CA3 (at protein level). Expressed in all principal neuronal populations of the HF, namely pyramidal neurons in the subiculum and CA1-3, granule cells in the dense cell layer of the DG (DGg), and polymorph cells in the hilus of the DG (DGh). Maximal levels in CA2, CA3, and DGh. Isoform 2 not expressed in the cerebral cortex.

It is found in the cytoplasm. Its subcellular location is the cytoplasmic vesicle membrane. It localises to the endosome membrane. The protein localises to the melanosome membrane. The protein resides in the postsynaptic density. It is found in the endoplasmic reticulum. Its subcellular location is the nucleus. It localises to the cytoplasmic vesicle. The protein localises to the secretory vesicle. The protein resides in the synaptic vesicle membrane. It is found in the postsynaptic cell membrane. In terms of biological role, component of the BLOC-1 complex, a complex that is required for normal biogenesis of lysosome-related organelles (LRO), such as platelet dense granules and melanosomes. In concert with the AP-3 complex, the BLOC-1 complex is required to target membrane protein cargos into vesicles assembled at cell bodies for delivery into neurites and nerve terminals. The BLOC-1 complex, in association with SNARE proteins, is also proposed to be involved in neurite extension. Associates with the BLOC-2 complex to facilitate the transport of TYRP1 independent of AP-3 function. Plays a role in synaptic vesicle trafficking and in neurotransmitter release. Plays a role in the regulation of cell surface exposure of DRD2. May play a role in actin cytoskeleton reorganization and neurite outgrowth. May modulate MAPK8 phosphorylation. Appears to promote neuronal transmission and viability through regulating the expression of SNAP25 and SYN1, modulating PI3-kinase-Akt signaling and influencing glutamatergic release. Regulates the expression of SYN1 through binding to its promoter. Modulates prefrontal cortical activity via the dopamine/D2 pathway. In Homo sapiens (Human), this protein is Dysbindin (DTNBP1).